The primary structure comprises 347 residues: Phosphoribosylformylglycinamidine cyclo-ligase (347 aa).

It belongs to the AIR synthase family.

Its subcellular location is the cytoplasm. The catalysed reaction is 2-formamido-N(1)-(5-O-phospho-beta-D-ribosyl)acetamidine + ATP = 5-amino-1-(5-phospho-beta-D-ribosyl)imidazole + ADP + phosphate + H(+). It participates in purine metabolism; IMP biosynthesis via de novo pathway; 5-amino-1-(5-phospho-D-ribosyl)imidazole from N(2)-formyl-N(1)-(5-phospho-D-ribosyl)glycinamide: step 2/2. The chain is Phosphoribosylformylglycinamidine cyclo-ligase from Dechloromonas aromatica (strain RCB).